The primary structure comprises 499 residues: NADH-quinone oxidoreductase subunit N (499 aa).

14 helical membrane-spanning segments follow: residues 16–36, 42–62, 77–97, 109–129, 133–153, 167–187, 208–228, 252–272, 274–294, 302–322, 327–347, 376–396, 411–433, and 463–483; these read AAFSMSVVGGVGLAMIVLDAF, AIPWLGVAALGVSAVWEITHL, GGFVAFINLIILLTGLATILL, YGEVYALIMFCTVGMIMLGSA, VSIFLGLETMSVCLYVLTGFI, FLLGAFSTGFFLYGIALMYGA, LLFWGGFALFLVGFFFKVSAA, ATKAAAFAALILVLVHAVPGG, WQLSVAAVAVLTMVIGNVMAL, LLAYSSIAHAGYLLVGLSAGT, AGALFYLLVYAVMNIGAFGVM, GSTMGVFMLSLIGFPPLGGFI, TWLVVIGVLMSALSAYYYLRVVY, and GTLVVCAVALVVLGVFFGGVL.

It belongs to the complex I subunit 2 family. In terms of assembly, NDH-1 is composed of 14 different subunits. Subunits NuoA, H, J, K, L, M, N constitute the membrane sector of the complex.

It localises to the cell inner membrane. It carries out the reaction a quinone + NADH + 5 H(+)(in) = a quinol + NAD(+) + 4 H(+)(out). Functionally, NDH-1 shuttles electrons from NADH, via FMN and iron-sulfur (Fe-S) centers, to quinones in the respiratory chain. The immediate electron acceptor for the enzyme in this species is believed to be a menaquinone. Couples the redox reaction to proton translocation (for every two electrons transferred, four hydrogen ions are translocated across the cytoplasmic membrane), and thus conserves the redox energy in a proton gradient. The polypeptide is NADH-quinone oxidoreductase subunit N (Salinibacter ruber (strain DSM 13855 / M31)).